Here is a 406-residue protein sequence, read N- to C-terminus: Tyrosine--tRNA ligase (406 aa).

An L-tyrosine-binding site is contributed by Y34. A 'HIGH' region motif is present at residues 39–48 (PTADSLHVGH). L-tyrosine is bound by residues Y167 and Q171. Residues 227–231 (KMGKT) carry the 'KMSKS' region motif. K230 provides a ligand contact to ATP. One can recognise an S4 RNA-binding domain in the interval 339-404 (RKIVDVLFEA…GKKEYHRLLV (66 aa)).

This sequence belongs to the class-I aminoacyl-tRNA synthetase family. TyrS type 1 subfamily. Homodimer.

It is found in the cytoplasm. The catalysed reaction is tRNA(Tyr) + L-tyrosine + ATP = L-tyrosyl-tRNA(Tyr) + AMP + diphosphate + H(+). In terms of biological role, catalyzes the attachment of tyrosine to tRNA(Tyr) in a two-step reaction: tyrosine is first activated by ATP to form Tyr-AMP and then transferred to the acceptor end of tRNA(Tyr). This chain is Tyrosine--tRNA ligase, found in Caldanaerobacter subterraneus subsp. tengcongensis (strain DSM 15242 / JCM 11007 / NBRC 100824 / MB4) (Thermoanaerobacter tengcongensis).